The primary structure comprises 341 residues: N-acetyl-gamma-glutamyl-phosphate reductase (341 aa).

Cys148 is a catalytic residue.

It belongs to the NAGSA dehydrogenase family. Type 1 subfamily.

It localises to the cytoplasm. It carries out the reaction N-acetyl-L-glutamate 5-semialdehyde + phosphate + NADP(+) = N-acetyl-L-glutamyl 5-phosphate + NADPH + H(+). The protein operates within amino-acid biosynthesis; L-arginine biosynthesis; N(2)-acetyl-L-ornithine from L-glutamate: step 3/4. Catalyzes the NADPH-dependent reduction of N-acetyl-5-glutamyl phosphate to yield N-acetyl-L-glutamate 5-semialdehyde. In Pseudothermotoga lettingae (strain ATCC BAA-301 / DSM 14385 / NBRC 107922 / TMO) (Thermotoga lettingae), this protein is N-acetyl-gamma-glutamyl-phosphate reductase.